A 611-amino-acid chain; its full sequence is MDLRHLLLTLVLVCANDSLSASDDVLRLPQISKCRSPELETFSCYWTDGNFYNLSAPGTIQLLYMKRNDEDWKECPDYITAGENSCYFNTSYTSIWIPYCVKLVNKDEVFDEKCFSVDEIVLPDPPVHLNWTLLNTSQTGIHGDIQVRWDPPPTADVQKGWITLEYELQYKEVNETKWKELEPRLSTMVPLYSLKIGRDYEIRVRSRQRTSEKFGEFSEILYVSFSQAGIEFVHCAEEIEFPWFLVVIFGACGLAVTVILILLSKQSRLKMLIFPPVPVPKIKGIDPDLLKKGKLDEVNSILASHDNYKTQLYNDDLWVEFIELDIEDPDEKNRVSDTDRLLSEDHLKSHSCLGAKDDDSGRASCCEPDIPETDFSASDTCDAISDIDQFKKVTEKEEDLLCLGRKDNDESLPSLANTDTQQPRMSTRPENSQPWPPFADSIDAASPSAHNQLSNQNSLRNTDFYAQVSDITPAGSVVLSPGQKSKVARARCEFCTEQNFTLDNAYFCEADVKKCIAVISHEEDEPRVQAQICNEDTYFTTESLTTTGISLGASTAETPSPEVPVPDYTSIHIVHSPQGLVLNATALPVPDKEFNMSCGYVSTDQLNKIMP.

The signal sequence occupies residues Met1–Ser20. Asn16 carries N-linked (GlcNAc...) asparagine glycosylation. Over Ala21 to Glu240 the chain is Extracellular. Cys34 and Cys44 are oxidised to a cystine. N-linked (GlcNAc...) asparagine glycosylation occurs at Asn53. Cysteines 75 and 86 form a disulfide. Asn89 carries an N-linked (GlcNAc...) asparagine glycan. Cys100 and Cys114 are joined by a disulfide. The region spanning Pro125–Ala228 is the Fibronectin type-III domain. 3 N-linked (GlcNAc...) asparagine glycosylation sites follow: Asn130, Asn135, and Asn174. A WSXWS motif motif is present at residues Phe214–Ser218. The chain crosses the membrane as a helical span at residues Phe241–Ser264. At Lys265–Pro611 the chain is on the cytoplasmic side. Positions Lys270–Ala355 are required for JAK2 binding. Residues Ile273 to Lys281 carry the Box 1 motif motif. The short motif at Asp316–Asp325 is the UbE motif element. The tract at residues Ser411–Asn455 is disordered. A compositionally biased stretch (polar residues) spans Ser414–Gln433.

It belongs to the type I cytokine receptor family. Type 1 subfamily. The soluble form (GHBP) is produced by phorbol ester-promoted proteolytic cleavage at the cell surface (shedding) by ADAM17/TACE.

Its subcellular location is the cell membrane. It localises to the secreted. Functionally, receptor for pituitary gland growth hormone (GH1) involved in regulating postnatal body growth. On ligand binding, couples to the JAK2/STAT5 pathway. In terms of biological role, the soluble form (GHBP) acts as a reservoir of growth hormone in plasma and may be a modulator/inhibitor of GH signaling. The protein is Growth hormone receptor (GHR) of Columba livia (Rock dove).